Here is a 78-residue protein sequence, read N- to C-terminus: uncharacterized protein (78 aa).

Helical transmembrane passes span 20–40 (SVYFPPFFKAFAFGFVIWLVV) and 57–77 (LLMDLSLFAICVCLALAILIA).

Its subcellular location is the cell membrane. This is an uncharacterized protein from Escherichia coli (strain K12).